The following is a 510-amino-acid chain: ATP synthase subunit alpha (510 aa).

170-177 is a binding site for ATP; it reads GDRQTGKT.

This sequence belongs to the ATPase alpha/beta chains family. As to quaternary structure, F-type ATPases have 2 components, CF(1) - the catalytic core - and CF(0) - the membrane proton channel. CF(1) has five subunits: alpha(3), beta(3), gamma(1), delta(1), epsilon(1). CF(0) has three main subunits: a(1), b(2) and c(9-12). The alpha and beta chains form an alternating ring which encloses part of the gamma chain. CF(1) is attached to CF(0) by a central stalk formed by the gamma and epsilon chains, while a peripheral stalk is formed by the delta and b chains.

Its subcellular location is the cell inner membrane. The enzyme catalyses ATP + H2O + 4 H(+)(in) = ADP + phosphate + 5 H(+)(out). In terms of biological role, produces ATP from ADP in the presence of a proton gradient across the membrane. The alpha chain is a regulatory subunit. The sequence is that of ATP synthase subunit alpha from Maricaulis maris (strain MCS10) (Caulobacter maris).